Consider the following 237-residue polypeptide: MKPKTFYNLLAEQNLPLSDQQKEQFERYFELLVEWNEKINLTAITDKEEVYLKHFYDSIAPILQGLIPNETIKLLDIGAGAGFPSLPMKILYPELDVTIIDSLNKRINFLQLLAQELDLNGVHFYHGRAEDFAQDKNFRAQYDFVTARAVARMQVLSELTIPYLKVGGKLLALKASNAPEELLEAKNALNLLFSKVEDNLSYALPNRDPRYITVVEKKKETPNKYPRKAGMPNKRPL.

S-adenosyl-L-methionine contacts are provided by residues Gly78, Phe83, 129 to 130, and Arg148; that span reads AE. Residues 218 to 237 form a disordered region; the sequence is KKETPNKYPRKAGMPNKRPL.

Belongs to the methyltransferase superfamily. RNA methyltransferase RsmG family.

The protein resides in the cytoplasm. In terms of biological role, specifically methylates the N7 position of a guanine in 16S rRNA. The protein is Ribosomal RNA small subunit methyltransferase G of Streptococcus pneumoniae serotype 19F (strain G54).